Here is a 378-residue protein sequence, read N- to C-terminus: Ribosomal RNA large subunit methyltransferase G (378 aa).

This sequence belongs to the methyltransferase superfamily. RlmG family.

The protein resides in the cytoplasm. It carries out the reaction guanosine(1835) in 23S rRNA + S-adenosyl-L-methionine = N(2)-methylguanosine(1835) in 23S rRNA + S-adenosyl-L-homocysteine + H(+). Its function is as follows. Specifically methylates the guanine in position 1835 (m2G1835) of 23S rRNA. The sequence is that of Ribosomal RNA large subunit methyltransferase G from Shigella flexneri serotype 5b (strain 8401).